The following is a 143-amino-acid chain: Hemoglobin subunit alpha (143 aa).

N-acetylserine is present on serine 2. Residues 2-143 (SLSDKDKAAV…VALALAEKYR (142 aa)) enclose the Globin domain. Histidine 60 is a binding site for O2. Histidine 89 lines the heme b pocket.

It belongs to the globin family. Heterotetramer of two alpha chains and two beta chains. In terms of tissue distribution, red blood cells.

Functionally, involved in oxygen transport from the lung to the various peripheral tissues. The sequence is that of Hemoglobin subunit alpha (hba) from Artedidraco orianae (Barbeled plunderfish).